The sequence spans 336 residues: Heat-inducible transcription repressor HrcA (336 aa).

It belongs to the HrcA family.

Its function is as follows. Negative regulator of class I heat shock genes (grpE-dnaK-dnaJ and groELS operons). Prevents heat-shock induction of these operons. This Variovorax paradoxus (strain S110) protein is Heat-inducible transcription repressor HrcA.